Reading from the N-terminus, the 461-residue chain is Alcaligin biosynthesis enzyme (461 aa).

9 to 15 contacts FAD; the sequence is VAIGIGP.

The protein belongs to the lysine N(6)-hydroxylase/L-ornithine N(5)-oxygenase family. Requires FAD as cofactor.

The protein operates within siderophore biosynthesis; alcaligin biosynthesis. In Bordetella bronchiseptica (strain ATCC BAA-588 / NCTC 13252 / RB50) (Alcaligenes bronchisepticus), this protein is Alcaligin biosynthesis enzyme (alcA).